The sequence spans 157 residues: MRIIGIDPGLGRVGYGIIEIQNEKKIFLDCGVIETNKNKGEGDRLYEIFNDLNTLIDQWKPDIAAVEKFFFYRSSTTISVVQARGVIMMVFAFKSIKVSEYAPSQVKLTIAGSGKASKKEVIEAVMYNLNLTRAPKPDDSADALAIALTKLNEEGFN.

Catalysis depends on residues Asp7, Glu67, and Asp139. Mg(2+)-binding residues include Asp7, Glu67, and Asp139.

It belongs to the RuvC family. As to quaternary structure, homodimer which binds Holliday junction (HJ) DNA. The HJ becomes 2-fold symmetrical on binding to RuvC with unstacked arms; it has a different conformation from HJ DNA in complex with RuvA. In the full resolvosome a probable DNA-RuvA(4)-RuvB(12)-RuvC(2) complex forms which resolves the HJ. Requires Mg(2+) as cofactor.

It localises to the cytoplasm. It carries out the reaction Endonucleolytic cleavage at a junction such as a reciprocal single-stranded crossover between two homologous DNA duplexes (Holliday junction).. The RuvA-RuvB-RuvC complex processes Holliday junction (HJ) DNA during genetic recombination and DNA repair. Endonuclease that resolves HJ intermediates. Cleaves cruciform DNA by making single-stranded nicks across the HJ at symmetrical positions within the homologous arms, yielding a 5'-phosphate and a 3'-hydroxyl group; requires a central core of homology in the junction. The consensus cleavage sequence is 5'-(A/T)TT(C/G)-3'. Cleavage occurs on the 3'-side of the TT dinucleotide at the point of strand exchange. HJ branch migration catalyzed by RuvA-RuvB allows RuvC to scan DNA until it finds its consensus sequence, where it cleaves and resolves the cruciform DNA. This chain is Crossover junction endodeoxyribonuclease RuvC, found in Prochlorococcus marinus subsp. pastoris (strain CCMP1986 / NIES-2087 / MED4).